The sequence spans 361 residues: Chorismate synthase (361 aa).

The NADP(+) site is built by R48 and R54. FMN-binding positions include 125–127 (RSS), 238–239 (NA), G278, 293–297 (KPTSS), and R319.

The protein belongs to the chorismate synthase family. In terms of assembly, homotetramer. It depends on FMNH2 as a cofactor.

It carries out the reaction 5-O-(1-carboxyvinyl)-3-phosphoshikimate = chorismate + phosphate. Its pathway is metabolic intermediate biosynthesis; chorismate biosynthesis; chorismate from D-erythrose 4-phosphate and phosphoenolpyruvate: step 7/7. In terms of biological role, catalyzes the anti-1,4-elimination of the C-3 phosphate and the C-6 proR hydrogen from 5-enolpyruvylshikimate-3-phosphate (EPSP) to yield chorismate, which is the branch point compound that serves as the starting substrate for the three terminal pathways of aromatic amino acid biosynthesis. This reaction introduces a second double bond into the aromatic ring system. This Enterobacter sp. (strain 638) protein is Chorismate synthase.